The chain runs to 72 residues: Enterobactin biosynthesis protein YbdZ (72 aa).

The protein belongs to the MbtH-like family.

Involved in the biosynthesis of the siderophore enterobactin (enterochelin), which is a macrocyclic trimeric lactone of N-(2,3-dihydroxybenzoyl)-serine. Plays a role in the catalytic function of EntF. It is required for adenylation of amino acids in non-ribosomal peptide biosynthesis. The sequence is that of Enterobactin biosynthesis protein YbdZ from Escherichia coli (strain K12).